A 229-amino-acid chain; its full sequence is ATPase SWSAP1 (229 aa).

The interval 209–229 is disordered; the sequence is PWPTQAGDPSSGKGSSSGGQP.

In terms of assembly, interacts with ZSWIM7; they form a functional complex involved in homologous recombination repair and stabilize each other. Interacts with RAD51, RAD51B, RAD51C, RAD51D and XRCC3; involved in homologous recombination repair.

Its subcellular location is the nucleus. Its function is as follows. ATPase which is preferentially stimulated by single-stranded DNA and is involved in homologous recombination repair (HRR). Has a DNA-binding activity which is independent of its ATPase activity. The polypeptide is ATPase SWSAP1 (SWSAP1) (Homo sapiens (Human)).